The sequence spans 473 residues: Photosystem II CP43 reaction center protein (473 aa).

Positions 1–14 (MKTLYSLRRFSHVE) are excised as a propeptide. An N-acetylthreonine modification is found at Thr-15. A Phosphothreonine modification is found at Thr-15. The next 5 helical transmembrane spans lie at 69-93 (LFEVAHFGPEKPMYEQGLILLPHLA), 134-155 (LLGPEIIEESFPLFRYVWKDRN), 178-200 (KALYFGGVYDTWAPGGGDVRKIT), 255-275 (KPFAWARRALVWSGEAYLSYS), and 291-312 (WFNNTAYPSEFYGPTGPEASQA). [CaMn4O5] cluster is bound at residue Glu-367. A helical transmembrane segment spans residues 447–471 (RARAAAAGFEKGIDRDFEPVLSMTP).

The protein belongs to the PsbB/PsbC family. PsbC subfamily. In terms of assembly, PSII is composed of 1 copy each of membrane proteins PsbA, PsbB, PsbC, PsbD, PsbE, PsbF, PsbH, PsbI, PsbJ, PsbK, PsbL, PsbM, PsbT, PsbX, PsbY, PsbZ, Psb30/Ycf12, at least 3 peripheral proteins of the oxygen-evolving complex and a large number of cofactors. It forms dimeric complexes. Requires Binds multiple chlorophylls and provides some of the ligands for the Ca-4Mn-5O cluster of the oxygen-evolving complex. It may also provide a ligand for a Cl- that is required for oxygen evolution. PSII binds additional chlorophylls, carotenoids and specific lipids. as cofactor.

It localises to the plastid membrane. Functionally, one of the components of the core complex of photosystem II (PSII). It binds chlorophyll and helps catalyze the primary light-induced photochemical processes of PSII. PSII is a light-driven water:plastoquinone oxidoreductase, using light energy to abstract electrons from H(2)O, generating O(2) and a proton gradient subsequently used for ATP formation. The chain is Photosystem II CP43 reaction center protein from Cuscuta gronovii (Common dodder).